The sequence spans 372 residues: Peroxisomal biogenesis factor 3 (372 aa).

The Cytoplasmic segment spans residues 1-15; sequence MLRSMWNFLKRHKKK. The tract at residues 1 to 45 is targeting to peroxisomes; the sequence is MLRSMWNFLKRHKKKCIFLGTVLGGVYILGKYGQKKIREIQEREA. Residues 16-36 form a helical membrane-spanning segment; sequence CIFLGTVLGGVYILGKYGQKK. Over 37–116 the chain is Peroxisomal; that stretch reads IREIQEREAA…LKIISFTRSI (80 aa). A helical transmembrane segment spans residues 117 to 140; sequence VAVYSTCMLVVLLRVQLNIIGGYI. The segment at 120–136 is interaction with PEX19; it reads YSTCMLVVLLRVQLNII. The Cytoplasmic segment spans residues 141–372; the sequence is YLDNATVGKN…AFSTPQQLEK (232 aa).

It belongs to the peroxin-3 family. As to quaternary structure, interacts with PEX19. As to expression, identified in all tissues analyzed, with the strongest expression in liver and in testis.

Its subcellular location is the peroxisome membrane. Its function is as follows. Involved in peroxisome biosynthesis and integrity. Assembles membrane vesicles before the matrix proteins are translocated. As a docking factor for PEX19, is necessary for the import of peroxisomal membrane proteins in the peroxisomes. The chain is Peroxisomal biogenesis factor 3 (Pex3) from Mus musculus (Mouse).